Reading from the N-terminus, the 299-residue chain is ATP phosphoribosyltransferase (299 aa).

This sequence belongs to the ATP phosphoribosyltransferase family. Long subfamily. It depends on Mg(2+) as a cofactor.

It localises to the cytoplasm. The catalysed reaction is 1-(5-phospho-beta-D-ribosyl)-ATP + diphosphate = 5-phospho-alpha-D-ribose 1-diphosphate + ATP. Its pathway is amino-acid biosynthesis; L-histidine biosynthesis; L-histidine from 5-phospho-alpha-D-ribose 1-diphosphate: step 1/9. Feedback inhibited by histidine. Functionally, catalyzes the condensation of ATP and 5-phosphoribose 1-diphosphate to form N'-(5'-phosphoribosyl)-ATP (PR-ATP). Has a crucial role in the pathway because the rate of histidine biosynthesis seems to be controlled primarily by regulation of HisG enzymatic activity. This Baumannia cicadellinicola subsp. Homalodisca coagulata protein is ATP phosphoribosyltransferase.